Here is a 415-residue protein sequence, read N- to C-terminus: tRNA (cytosine(38)-C(5))-methyltransferase (415 aa).

An SAM-dependent MTase C5-type domain is found at 4–396; it reads LRVLELYSGI…TVLCEGFGNA (393 aa). Residues 13 to 15, aspartate 34, 57 to 58, and serine 76 each bind S-adenosyl-L-methionine; these read IGG and IE. Residue cysteine 79 is part of the active site. An S-adenosyl-L-methionine-binding site is contributed by serine 376.

It belongs to the class I-like SAM-binding methyltransferase superfamily. C5-methyltransferase family. In terms of tissue distribution, highly expressed in thymus, testis, and at much lower levels in spleen, lung, brain, heart, kidney, liver, skeletal muscle and embryonic stem cells.

It is found in the cytoplasm. The catalysed reaction is cytidine(38) in tRNA + S-adenosyl-L-methionine = 5-methylcytidine(38) in tRNA + S-adenosyl-L-homocysteine + H(+). Its function is as follows. Specifically methylates cytosine 38 in the anticodon loop of tRNA(Asp). Has higher activity on tRNA(Asp) modified with queuosine at position 34. This is tRNA (cytosine(38)-C(5))-methyltransferase (Trdmt1) from Mus musculus (Mouse).